Consider the following 553-residue polypeptide: Putative transport protein YidE (553 aa).

The next 5 helical transmembrane spans lie at 4-24, 28-48, 65-85, 95-115, and 158-178; these read IALT…IGNV, GIGL…HFVS, FGLI…FFAS, LFAV…HKLF, and MSYA…MWML. 2 RCK C-terminal domains span residues 191-276 and 279-361; these read QQHE…VIGQ and DTSL…VLGN. 6 helical membrane passes run 371-391, 393-413, 439-459, 464-484, 493-513, and 533-553; these read MLPV…PVFV, GFPA…ALIL, IVLF…NTLV, LSWI…VGIL, YLTM…LAFA, and LVMF…WSIG.

This sequence belongs to the AAE transporter (TC 2.A.81) family. YidE subfamily.

The protein localises to the cell membrane. This Shigella boydii serotype 4 (strain Sb227) protein is Putative transport protein YidE.